The primary structure comprises 833 residues: DNA polymerase I, thermostable (833 aa).

Positions 173–267 (VPPERWVDFR…FKALRRRTPD (95 aa)) constitute a 5'-3' exonuclease domain. The tract at residues 412 to 833 (ERLFQNLFPR…GRDWLEAKQD (422 aa)) is polymerase.

It belongs to the DNA polymerase type-A family.

It carries out the reaction DNA(n) + a 2'-deoxyribonucleoside 5'-triphosphate = DNA(n+1) + diphosphate. In addition to polymerase activity, this DNA polymerase exhibits 5'-3' exonuclease activity. Unlikely to have 3'-5' exonuclease activity due to absence of a 3'-5' exonuclease domain. The polypeptide is DNA polymerase I, thermostable (polA) (Thermus filiformis).